We begin with the raw amino-acid sequence, 345 residues long: Biotin synthase (345 aa).

The 229-residue stretch at 67–295 folds into the Radical SAM core domain; sequence YKVQLASLLS…KSRIRLSAGR (229 aa). The [4Fe-4S] cluster site is built by Cys-82, Cys-86, and Cys-89. [2Fe-2S] cluster-binding residues include Cys-126, Cys-158, Cys-218, and Arg-290.

This sequence belongs to the radical SAM superfamily. Biotin synthase family. In terms of assembly, homodimer. The cofactor is [4Fe-4S] cluster. [2Fe-2S] cluster serves as cofactor.

It catalyses the reaction (4R,5S)-dethiobiotin + (sulfur carrier)-SH + 2 reduced [2Fe-2S]-[ferredoxin] + 2 S-adenosyl-L-methionine = (sulfur carrier)-H + biotin + 2 5'-deoxyadenosine + 2 L-methionine + 2 oxidized [2Fe-2S]-[ferredoxin]. It participates in cofactor biosynthesis; biotin biosynthesis; biotin from 7,8-diaminononanoate: step 2/2. In terms of biological role, catalyzes the conversion of dethiobiotin (DTB) to biotin by the insertion of a sulfur atom into dethiobiotin via a radical-based mechanism. The chain is Biotin synthase from Prochlorococcus marinus (strain NATL1A).